A 545-amino-acid chain; its full sequence is Ubiquitin carboxyl-terminal hydrolase 17-like protein C (545 aa).

One can recognise a USP domain in the interval 51 to 348; sequence CGLQNTGNSC…NAYVLFYVQQ (298 aa). The Nucleophile role is filled by cysteine 60. Catalysis depends on histidine 307, which acts as the Proton acceptor. 2 disordered regions span residues 368–442 and 489–539; these read DPEY…QKLG and WGRD…KQGQ. The segment covering 374 to 385 has biased composition (basic residues); sequence KKSRRKKHKKKS. Basic and acidic residues-rich tracts occupy residues 393–404 and 489–505; these read EPCKNREKRATK and WGRD…HNAD. Residues 508–519 show a composition bias toward polar residues; it reads LTSQDPVNTGQL. Residues 524-537 show a composition bias toward basic residues; the sequence is GRRRSKKGKNKNKQ.

Belongs to the peptidase C19 family. USP17 subfamily. In terms of tissue distribution, expressed in T cells.

Its subcellular location is the nucleus. The protein resides in the endoplasmic reticulum. The enzyme catalyses Thiol-dependent hydrolysis of ester, thioester, amide, peptide and isopeptide bonds formed by the C-terminal Gly of ubiquitin (a 76-residue protein attached to proteins as an intracellular targeting signal).. Its function is as follows. Deubiquitinating enzyme that removes conjugated ubiquitin from specific proteins to regulate different cellular processes. Important for preimplantation stage embryonic development. This Mus musculus (Mouse) protein is Ubiquitin carboxyl-terminal hydrolase 17-like protein C.